Here is a 579-residue protein sequence, read N- to C-terminus: Small conductance calcium-activated potassium channel protein 2 (579 aa).

2 disordered regions span residues 1-54 (MSSC…AAAA) and 90-115 (TGGG…KKNQ). A compositionally biased stretch (gly residues) spans 90 to 103 (TGGGGGGGGSGHGS). The helical transmembrane segment at 138–158 (ALIFGMFGIVVMVIETELSWG) threads the bilayer. Phosphotyrosine is present on tyrosine 160. Residues 168–188 (LALKCLISLSTIILLGLIIVY) form a helical membrane-spanning segment. A helical membrane pass occupies residues 214-234 (IFFICLEILVCAIHPIPGNYT). A helical transmembrane segment spans residues 256 to 276 (IILSIPMFLRLYLIARVMLLH). The chain crosses the membrane as a helical span at residues 305-325 (LMTICPGTVLLVFSISLWIIA). Residues 345–365 (FLGAMWLISITFLSIGYGDMV) constitute an intramembrane region (pore-forming). A helical transmembrane segment spans residues 374-394 (VCLLTGIMGAGCTALVVAVVA). Residues 412–488 (DTQLTKRVKN…LVDLAKTQNI (77 aa)) form a calmodulin-binding region. The disordered stretch occupies residues 551-579 (VTYNAERSRSSSRRRRSSSTAPPTSSESS). Residues 568-579 (SSTAPPTSSESS) show a composition bias toward low complexity.

Belongs to the potassium channel KCNN family. KCa2.2/KCNN2 subfamily. In terms of assembly, homodimer. Heteromultimer with KCNN1 and KCNN3. The complex is composed of 4 channel subunits each of which binds to a calmodulin subunit which regulates the channel activity through calcium-binding. Interacts (via N-terminal domain) with MPP2. Expressed in atrial myocytes (at protein level). Widely expressed.

It localises to the membrane. The protein resides in the cytoplasm. The protein localises to the myofibril. Its subcellular location is the sarcomere. It is found in the z line. The catalysed reaction is K(+)(in) = K(+)(out). Its activity is regulated as follows. Inhibited by bee venom neurotoxin apamin. Inhibited by UCL 1684 and tetraethylammonium (TEA). Small conductance calcium-activated potassium channel that mediates the voltage-independent transmembrane transfer of potassium across the cell membrane through a constitutive interaction with calmodulin which binds the intracellular calcium allowing its opening. The current is characterized by a voltage-independent activation, an intracellular calcium concentration increase-dependent activation and a single-channel conductance of about 3 picosiemens. Also presents an inwardly rectifying current, thus reducing its already small outward conductance of potassium ions, which is particularly the case when the membrane potential displays positive values, above + 20 mV. The inward rectification could be due to a blockade of the outward current by intracellular divalent cations such as calcium and magnesium and could also be due to an intrinsic property of the channel pore, independent of intracellular divalent ions. There are three positively charged amino acids in the S6 transmembrane domain, close to the pore, that collectively control the conductance and rectification through an electrostatic mechanism. Additionally, electrostatic contributions from these residues also play an important role in determining the intrinsic open probability of the channel in the absence of calcium, affecting the apparent calcium affinity for activation. Forms an heteromeric complex with calmodulin, which is constitutively associated in a calcium-independent manner. Channel opening is triggered when calcium binds the calmodulin resulting in a rotary movement leading to the formation of the dimeric complex to open the gate. Plays a role in the repolarization phase of cardiac action potential. The sequence is that of Small conductance calcium-activated potassium channel protein 2 from Homo sapiens (Human).